The chain runs to 463 residues: Mitochondrial dynamics protein MID49 (463 aa).

Topologically, residues 1 to 24 (MAELQIRKKEKKSGDGIGTMVDFL) are mitochondrial intermembrane. The helical transmembrane segment at 25 to 47 (LANARLVLGVGGAAMLGIATLAV) threads the bilayer. The Cytoplasmic segment spans residues 48 to 463 (KRLIDRATSP…EPDDVLKRER (416 aa)). The segment at 87–119 (TLRRKEDLEHHCAPLSLPDPSQKMPEATGTSQV) is disordered. Basic and acidic residues predominate over residues 89-98 (RRKEDLEHHC).

It belongs to the MID49/MID51 family.

The protein resides in the mitochondrion outer membrane. Functionally, mitochondrial outer membrane protein which regulates mitochondrial organization. It is required for mitochondrial fission and promotes the recruitment and association of the fission mediator dynamin-related protein 1 (DNM1L) to the mitochondrial surface independently of the mitochondrial fission FIS1 and MFF proteins. Regulates DNM1L GTPase activity. The chain is Mitochondrial dynamics protein MID49 (mief2) from Xenopus laevis (African clawed frog).